The chain runs to 228 residues: Nuclear phosphoprotein UL3 homolog (228 aa).

It belongs to the alphaherpesvirinae HHV-1 UL3 family. In terms of processing, phosphorylated.

The protein resides in the host nucleus. This chain is Nuclear phosphoprotein UL3 homolog (MDV015), found in Gallus gallus (Chicken).